Consider the following 2155-residue polypeptide: Conidial pigment polyketide synthase PfmaE (2155 aa).

Positions 8 to 245 are N-terminal acylcarrier protein transacylase domain (SAT); sequence LLFGDQSLDT…TAIPVYGPYH (238 aa). Positions 381-813 constitute a Ketosynthase family 3 (KS3) domain; it reads KCKLAIVGMA…GGNTGLLLED (433 aa). Residues Cys553, His688, and His731 each act as for beta-ketoacyl synthase activity in the active site. Residues 910 to 1231 form a malonyl-CoA:ACP transacylase (MAT) domain region; that stretch reads AFMFTGQGSH…LCTLHSAGLN (322 aa). Ser1001 (for acyl/malonyl transferase activity) is an active-site residue. The tract at residues 1293–1608 is product template (PT) domain; it reads TTTVQKVVRE…PRKVLNVVLP (316 aa). The interval 1297–1428 is N-terminal hotdog fold; the sequence is QKVVREEVKG…CKVFFGDNEE (132 aa). In terms of domain architecture, PKS/mFAS DH spans 1297-1604; sequence QKVVREEVKG…FQAIPRKVLN (308 aa). His1329 functions as the Proton acceptor; for dehydratase activity in the catalytic mechanism. Residues 1455-1604 are C-terminal hotdog fold; that stretch reads DASKIGRGLA…FQAIPRKVLN (150 aa). The Proton donor; for dehydratase activity role is filled by Asp1516. 2 Carrier domains span residues 1653 to 1730 and 1779 to 1856; these read LTKN…AQFE and GNVS…GIED. Ser1690 is modified (O-(pantetheine 4'-phosphoryl)serine). Positions 1738-1782 are disordered; the sequence is EENAHSSASSDSADMETESNFTTPSDDSEKDEVKGDAPAADGNVS. Residue Ser1816 is modified to O-(pantetheine 4'-phosphoryl)serine. The tract at residues 1855–1892 is disordered; sequence EDKPKRAAPKSAKQEPAKPEPKVQGEAKAHTNPVDNYP. Basic and acidic residues predominate over residues 1866 to 1883; the sequence is AKQEPAKPEPKVQGEAKA. The interval 1911-2041 is thioesterase (TE) domain; sequence QLFMIPDGSG…LGEGDDAEAK (131 aa).

The protein operates within pigment biosynthesis; melanin biosynthesis. In terms of biological role, non-reducing polyketide synthase; part of the gene cluster that mediates the biosynthesis of dihydroxynaphthalene (DHN)-melanin, a bluish-green pigment forming a dark layer in the conidial wall that protects the conidia from UV radiations. The first step of the pathway is the production of the pentaketide 1,3,6,8-tetrahydroxynaphthalene (1,3,6,8-THN or T4HN) by the polyketide synthase PfmaE though condensation of acetyl-CoA with malonyl-CoA. T4HN is not stable and easily oxidizes into the stable form flaviolin. T4HN is also substrate of the hydroxynaphthalene reductase PfmaG to yield scytalone. The scytalone dehydratase PfmaJ then reduces scytalone to 1,3,8-THN. 1,3,8-THN is then substrate of the hydroxynaphthalene reductase PfmaI to yield vermelone. Vermelone is further converted by the multicopper oxidase PfmaD to 1,8-DHN. Finally the laccase PFICI_06862 transforms 1,8-DHN to DHN-melanin. The roles of the 5-oxoprolinase PfmaA and the proline iminopeptidase PfmaB within the cluster have not been elucidated yet. The chain is Conidial pigment polyketide synthase PfmaE from Pestalotiopsis fici (strain W106-1 / CGMCC3.15140).